The following is a 226-amino-acid chain: E3 ubiquitin-protein ligase RNF186 (226 aa).

The RING-type zinc-finger motif lies at 39–85; sequence CLVCREPYSGVRPPKLLGCQHAFCAVCLKLLLCVQDDAWSIPCPLCR. The disordered stretch occupies residues 121 to 143; that stretch reads GLANPATLTAGQPREAGEEEQDA. 2 consecutive transmembrane segments (helical) span residues 157–177 and 179–199; these read HLLLLVLLIILILPFIYPGVI and WVLSFLETLALLLALLFCSHP.

Interacts with BNIP1. Polyubiquitinated. 'Lys-29' autoubiquitination leads to proteasomal degradation.

It localises to the endoplasmic reticulum membrane. The enzyme catalyses S-ubiquitinyl-[E2 ubiquitin-conjugating enzyme]-L-cysteine + [acceptor protein]-L-lysine = [E2 ubiquitin-conjugating enzyme]-L-cysteine + N(6)-ubiquitinyl-[acceptor protein]-L-lysine.. It participates in protein modification; protein ubiquitination. E3 ubiquitin protein ligase that is part of an apoptotic signaling pathway activated by endoplasmic reticulum stress. Stimulates the expression of proteins specific of the unfolded protein response (UPR), ubiquitinates BNIP1 and regulates its localization to the mitochondrion and induces calcium release from the endoplasmic reticulum that ultimately leads to cell apoptosis. Plays a role in the maintenance of intestinal homeostasis and clearance of enteric pathogens. Upon NOD2 stimulation, ubiquitinates the ER stress sensor activating transcription factor 6/ATF6 and promotes the unfolded protein response UPR. Participates in basal level of autophagy maintenance by regulating the ubiquitination of EPHB2. Upon stimulation by ligand EFNB1, ubiquitinates EPHB2 and further recruits MAP1LC3B for autophagy induction. Controls nutrient sensing by ubiquitinating Sestrin-2/SESN2, which is an intracellular sensor of cytosolic leucine and inhibitor of mTORC1 activity. This chain is E3 ubiquitin-protein ligase RNF186, found in Bos taurus (Bovine).